Consider the following 488-residue polypeptide: Malonate-semialdehyde dehydrogenase (488 aa).

NAD(+)-binding residues include Ala150, Phe152, Lys176, Glu179, Arg180, Ser229, and Thr251. The active-site Nucleophile is Cys284. Glu382 is an NAD(+) binding site.

It belongs to the aldehyde dehydrogenase family. IolA subfamily. In terms of assembly, homotetramer.

It catalyses the reaction 3-oxopropanoate + NAD(+) + CoA + H2O = hydrogencarbonate + acetyl-CoA + NADH + H(+). The catalysed reaction is 2-methyl-3-oxopropanoate + NAD(+) + CoA + H2O = propanoyl-CoA + hydrogencarbonate + NADH + H(+). Its pathway is polyol metabolism; myo-inositol degradation into acetyl-CoA; acetyl-CoA from myo-inositol: step 7/7. Functionally, catalyzes the oxidation of malonate semialdehyde (MSA) and methylmalonate semialdehyde (MMSA) into acetyl-CoA and propanoyl-CoA, respectively. Is involved in a myo-inositol catabolic pathway. Bicarbonate, and not CO2, is the end-product of the enzymatic reaction. This chain is Malonate-semialdehyde dehydrogenase, found in Listeria monocytogenes serovar 1/2a (strain ATCC BAA-679 / EGD-e).